A 543-amino-acid chain; its full sequence is Hydroxylamine reductase (543 aa).

4 residues coordinate [4Fe-4S] cluster: Cys-5, Cys-8, Cys-17, and Cys-23. Positions 236, 260, 304, 398, 426, 451, 486, and 488 each coordinate hybrid [4Fe-2O-2S] cluster. Cys-398 is subject to Cysteine persulfide.

This sequence belongs to the HCP family. The cofactor is [4Fe-4S] cluster. It depends on hybrid [4Fe-2O-2S] cluster as a cofactor.

Its subcellular location is the cytoplasm. The enzyme catalyses A + NH4(+) + H2O = hydroxylamine + AH2 + H(+). Functionally, catalyzes the reduction of hydroxylamine to form NH(3) and H(2)O. The protein is Hydroxylamine reductase of Bacteroides fragilis (strain YCH46).